A 257-amino-acid chain; its full sequence is Flap endonuclease Xni (257 aa).

Mg(2+) is bound at residue D109. One can recognise a 5'-3' exonuclease domain in the interval 165-254 (VKPEQLADYW…GFNLQDIRYE (90 aa)). The K(+) site is built by L176, P185, I187, and I190. Residues 189 to 194 (GIGPKA) are interaction with DNA.

The protein belongs to the Xni family. It depends on Mg(2+) as a cofactor. K(+) is required as a cofactor.

Its function is as follows. Has flap endonuclease activity. During DNA replication, flap endonucleases cleave the 5'-overhanging flap structure that is generated by displacement synthesis when DNA polymerase encounters the 5'-end of a downstream Okazaki fragment. This Vibrio atlanticus (strain LGP32) (Vibrio splendidus (strain Mel32)) protein is Flap endonuclease Xni.